Here is a 178-residue protein sequence, read N- to C-terminus: uncharacterized protein (178 aa).

The tract at residues 152–178 (KKLKGAEPKEHQAPNFEPPTEIFPESN) is disordered.

It belongs to the EUO family.

This is an uncharacterized protein from Chlamydia pneumoniae (Chlamydophila pneumoniae).